Consider the following 407-residue polypeptide: Tryptophan synthase beta chain (407 aa).

Lys-91 bears the N6-(pyridoxal phosphate)lysine mark.

Belongs to the TrpB family. Tetramer of two alpha and two beta chains. Pyridoxal 5'-phosphate serves as cofactor.

The catalysed reaction is (1S,2R)-1-C-(indol-3-yl)glycerol 3-phosphate + L-serine = D-glyceraldehyde 3-phosphate + L-tryptophan + H2O. Its pathway is amino-acid biosynthesis; L-tryptophan biosynthesis; L-tryptophan from chorismate: step 5/5. The beta subunit is responsible for the synthesis of L-tryptophan from indole and L-serine. This is Tryptophan synthase beta chain from Streptococcus pneumoniae (strain P1031).